The chain runs to 249 residues: Proteasome subunit alpha (249 aa).

Belongs to the peptidase T1A family. As to quaternary structure, the 20S proteasome core is composed of 14 alpha and 14 beta subunits that assemble into four stacked heptameric rings, resulting in a barrel-shaped structure. The two inner rings, each composed of seven catalytic beta subunits, are sandwiched by two outer rings, each composed of seven alpha subunits. The catalytic chamber with the active sites is on the inside of the barrel. Has a gated structure, the ends of the cylinder being occluded by the N-termini of the alpha-subunits. Is capped at one or both ends by the proteasome regulatory ATPase, PAN.

The protein localises to the cytoplasm. Its activity is regulated as follows. The formation of the proteasomal ATPase PAN-20S proteasome complex, via the docking of the C-termini of PAN into the intersubunit pockets in the alpha-rings, triggers opening of the gate for substrate entry. Interconversion between the open-gate and close-gate conformations leads to a dynamic regulation of the 20S proteasome proteolysis activity. Its function is as follows. Component of the proteasome core, a large protease complex with broad specificity involved in protein degradation. The chain is Proteasome subunit alpha from Methanosarcina barkeri (strain Fusaro / DSM 804).